Here is a 359-residue protein sequence, read N- to C-terminus: 3-dehydroquinate synthase (359 aa).

Residues 71 to 76, 105 to 109, 129 to 130, Lys142, Lys151, and 169 to 172 contribute to the NAD(+) site; these read DGEQYK, GVIGD, TT, and CLST. Residues Glu184, His247, and His264 each contribute to the Zn(2+) site.

It belongs to the sugar phosphate cyclases superfamily. Dehydroquinate synthase family. It depends on Co(2+) as a cofactor. Zn(2+) serves as cofactor. NAD(+) is required as a cofactor.

It localises to the cytoplasm. The catalysed reaction is 7-phospho-2-dehydro-3-deoxy-D-arabino-heptonate = 3-dehydroquinate + phosphate. It participates in metabolic intermediate biosynthesis; chorismate biosynthesis; chorismate from D-erythrose 4-phosphate and phosphoenolpyruvate: step 2/7. In terms of biological role, catalyzes the conversion of 3-deoxy-D-arabino-heptulosonate 7-phosphate (DAHP) to dehydroquinate (DHQ). In Shewanella piezotolerans (strain WP3 / JCM 13877), this protein is 3-dehydroquinate synthase.